Consider the following 210-residue polypeptide: UPF0301 protein OCAR_7326/OCA5_c07920 (210 aa).

This sequence belongs to the UPF0301 (AlgH) family.

This is UPF0301 protein OCAR_7326/OCA5_c07920 from Afipia carboxidovorans (strain ATCC 49405 / DSM 1227 / KCTC 32145 / OM5) (Oligotropha carboxidovorans).